We begin with the raw amino-acid sequence, 367 residues long: Glutamate 5-kinase (367 aa).

Lys-17 lines the ATP pocket. The substrate site is built by Ser-57, Asp-144, and Asn-156. ATP contacts are provided by residues 176-177 (SD) and 217-223 (TGGMTSK). A PUA domain is found at 279 to 357 (AGALTLDEGA…SELPGELRRP (79 aa)).

Belongs to the glutamate 5-kinase family.

Its subcellular location is the cytoplasm. The enzyme catalyses L-glutamate + ATP = L-glutamyl 5-phosphate + ADP. Its pathway is amino-acid biosynthesis; L-proline biosynthesis; L-glutamate 5-semialdehyde from L-glutamate: step 1/2. Its function is as follows. Catalyzes the transfer of a phosphate group to glutamate to form L-glutamate 5-phosphate. In Mycobacterium avium (strain 104), this protein is Glutamate 5-kinase.